The chain runs to 444 residues: Tol-Pal system protein TolB (444 aa).

The first 18 residues, 1–18, serve as a signal peptide directing secretion; the sequence is MKNIIYCILLLFSFNSYA.

The protein belongs to the TolB family. In terms of assembly, the Tol-Pal system is composed of five core proteins: the inner membrane proteins TolA, TolQ and TolR, the periplasmic protein TolB and the outer membrane protein Pal. They form a network linking the inner and outer membranes and the peptidoglycan layer.

It localises to the periplasm. Part of the Tol-Pal system, which plays a role in outer membrane invagination during cell division and is important for maintaining outer membrane integrity. This Rickettsia bellii (strain OSU 85-389) protein is Tol-Pal system protein TolB.